The primary structure comprises 239 residues: Proteasome activator complex subunit 2 (239 aa).

The residue at position 2 (A2) is an N-acetylalanine. At S10 the chain carries Phosphoserine. Positions 65–86 (DIPIPDPPPKDDEMETDKQEKK) are disordered. Positions 72–86 (PPKDDEMETDKQEKK) are enriched in basic and acidic residues.

It belongs to the PA28 family. As to quaternary structure, heterodimer of PSME1 and PSME2, which forms a hexameric ring.

In terms of biological role, implicated in immunoproteasome assembly and required for efficient antigen processing. The PA28 activator complex enhances the generation of class I binding peptides by altering the cleavage pattern of the proteasome. The protein is Proteasome activator complex subunit 2 (PSME2) of Bos taurus (Bovine).